The following is a 199-amino-acid chain: Putative AgrB-like protein (199 aa).

The next 5 helical transmembrane spans lie at 43–63, 81–101, 108–128, 139–159, and 165–185; these read IIIFLVFLFIKEIPLFLFSFI, YGCLTCSILYFMIILLFTRLF, FYIVFFILSLAITFIFAPCPN, LKILSLISLTFWIILFYLSPL, and ILISIFLQIIQVIIINTKGVI.

This sequence belongs to the AgrB family.

The protein localises to the cell membrane. In terms of biological role, may be involved in the proteolytic processing of a quorum sensing system signal molecule precursor. The polypeptide is Putative AgrB-like protein (cfg02) (Clostridium beijerinckii (Clostridium MP)).